Here is a 186-residue protein sequence, read N- to C-terminus: Periplasmic nitrate reductase, electron transfer subunit (186 aa).

Positions 1–20 are cleaved as a signal peptide; sequence MKTSKLNFLTLVASTGLALA. Residues His87, Cys102, Cys105, His106, His123, Cys144, Cys147, and His148 each coordinate heme c.

This sequence belongs to the NapB family. As to quaternary structure, component of the periplasmic nitrate reductase NapAB complex composed of NapA and NapB. In terms of processing, binds 2 heme C groups per subunit.

The protein localises to the periplasm. Electron transfer subunit of the periplasmic nitrate reductase complex NapAB. Transfers electrons to NapA subunit, thus allowing electron flow between membrane and periplasm. Essential for periplasmic nitrate reduction with nitrate as the terminal electron acceptor. In Wolinella succinogenes (strain ATCC 29543 / DSM 1740 / CCUG 13145 / JCM 31913 / LMG 7466 / NCTC 11488 / FDC 602W) (Vibrio succinogenes), this protein is Periplasmic nitrate reductase, electron transfer subunit.